The chain runs to 321 residues: Cytochrome c biogenesis protein CcsA (321 aa).

8 consecutive transmembrane segments (helical) span residues 17 to 37 (IVSIVITIHLITLLVDEIVGL), 44 to 64 (GMISTFLCITGLLVTRWIYSG), 71 to 91 (LYESLIFLSWSFSIIHMIPYF), 98 to 118 (LSLVTAPSAIFTQGFATSGLL), 143 to 163 (MVLSYGALLCGSLLSVALLVI), 225 to 245 (VISLGFIFLTIGILSGAVWAN), 258 to 275 (ETWAFITWTIFAIYLHTR), and 286 to 306 (AIVASIGFIIIWICYFGVNLL).

It belongs to the CcmF/CycK/Ccl1/NrfE/CcsA family. May interact with Ccs1.

It localises to the plastid. It is found in the chloroplast thylakoid membrane. In terms of biological role, required during biogenesis of c-type cytochromes (cytochrome c6 and cytochrome f) at the step of heme attachment. The polypeptide is Cytochrome c biogenesis protein CcsA (Buxus microphylla (Littleleaf boxwood)).